Consider the following 257-residue polypeptide: Global transcriptional regulator CodY (257 aa).

Positions 1–155 (MSLLSKTREL…AATVIGMEIL (155 aa)) are GAF domain. Positions 203–222 (ASKVADRVGITRSVIVNALR) form a DNA-binding region, H-T-H motif.

Belongs to the CodY family.

Its subcellular location is the cytoplasm. In terms of biological role, DNA-binding global transcriptional regulator which is involved in the adaptive response to starvation and acts by directly or indirectly controlling the expression of numerous genes in response to nutrient availability. During rapid exponential growth, CodY is highly active and represses genes whose products allow adaptation to nutrient depletion. The sequence is that of Global transcriptional regulator CodY from Staphylococcus haemolyticus (strain JCSC1435).